The chain runs to 306 residues: Phosphatidylserine decarboxylase proenzyme (306 aa).

Active-site charge relay system; for autoendoproteolytic cleavage activity residues include Asp-98, His-155, and Ser-259. Ser-259 functions as the Schiff-base intermediate with substrate; via pyruvic acid; for decarboxylase activity in the catalytic mechanism. Position 259 is a pyruvic acid (Ser); by autocatalysis (Ser-259).

This sequence belongs to the phosphatidylserine decarboxylase family. PSD-B subfamily. Prokaryotic type I sub-subfamily. As to quaternary structure, heterodimer of a large membrane-associated beta subunit and a small pyruvoyl-containing alpha subunit. Pyruvate serves as cofactor. In terms of processing, is synthesized initially as an inactive proenzyme. Formation of the active enzyme involves a self-maturation process in which the active site pyruvoyl group is generated from an internal serine residue via an autocatalytic post-translational modification. Two non-identical subunits are generated from the proenzyme in this reaction, and the pyruvate is formed at the N-terminus of the alpha chain, which is derived from the carboxyl end of the proenzyme. The autoendoproteolytic cleavage occurs by a canonical serine protease mechanism, in which the side chain hydroxyl group of the serine supplies its oxygen atom to form the C-terminus of the beta chain, while the remainder of the serine residue undergoes an oxidative deamination to produce ammonia and the pyruvoyl prosthetic group on the alpha chain. During this reaction, the Ser that is part of the protease active site of the proenzyme becomes the pyruvoyl prosthetic group, which constitutes an essential element of the active site of the mature decarboxylase.

The protein localises to the cell membrane. It catalyses the reaction a 1,2-diacyl-sn-glycero-3-phospho-L-serine + H(+) = a 1,2-diacyl-sn-glycero-3-phosphoethanolamine + CO2. The protein operates within phospholipid metabolism; phosphatidylethanolamine biosynthesis; phosphatidylethanolamine from CDP-diacylglycerol: step 2/2. In terms of biological role, catalyzes the formation of phosphatidylethanolamine (PtdEtn) from phosphatidylserine (PtdSer). This chain is Phosphatidylserine decarboxylase proenzyme, found in Nitrosococcus oceani (strain ATCC 19707 / BCRC 17464 / JCM 30415 / NCIMB 11848 / C-107).